A 229-amino-acid polypeptide reads, in one-letter code: Histone H1 (229 aa).

Disordered regions lie at residues 1 to 52 (MADT…SSHP) and 125 to 229 (APAL…RTRK). Residues 32-45 (KEKKKVIAAKKPKS) are compositionally biased toward basic residues. Residues 50-119 (SHPSFFEMIS…KVKNSFKLPS (70 aa)) enclose the H15 domain. Over residues 125-138 (APALAKKPTIPKPK) the composition is skewed to low complexity. Basic residues predominate over residues 139–160 (VAAKPKTAKIGAKPKAKAKVAA). 2 stretches are compositionally biased toward low complexity: residues 161 to 177 (KTKA…PAAK) and 185 to 205 (KPKT…VASP). The span at 206-229 (GKKKAVPVKKVKTVKSPAGKRTRK) shows a compositional bias: basic residues.

Belongs to the histone H1/H5 family.

It is found in the nucleus. The protein resides in the chromosome. Functionally, histones H1 are necessary for the condensation of nucleosome chains into higher-order structures. In Euphorbia esula (Leafy spurge), this protein is Histone H1.